The primary structure comprises 92 residues: Islet amyloid polypeptide (92 aa).

The N-terminal stretch at 1-22 (MCLLRLPVTLLVLCVALNELKA) is a signal peptide. A propeptide spanning residues 23-34 (TSIASDTGHQVG) is cleaved from the precursor. A disulfide bridge links C38 with C43. Y73 carries the tyrosine amide modification. The propeptide occupies 77 to 92 (NAPQISDRELLHYLPL).

Belongs to the calcitonin family. In terms of assembly, can form homodimers. Interacts with IDE and INS. Interaction with INS inhibits homodimerization and fibril formation.

The protein resides in the secreted. In terms of biological role, amylin/IAPP is a glucoregulatory peptide hormone that plays an important role in the regulation of energy homeostasis. Selectively inhibits insulin-stimulated glucose utilization and glycogen deposition in muscle, while not affecting adipocyte glucose metabolism. IAPP function is mediated by the CALCR-RAMPs (AMYRs) receptor complexes. Amylin can also bind CALCR receptor in the absence of RAMPs, although it is more selective for AMYRs. This chain is Islet amyloid polypeptide (IAPP), found in Cavia porcellus (Guinea pig).